Reading from the N-terminus, the 160-residue chain is Transcription antitermination protein NusB (160 aa).

This sequence belongs to the NusB family.

Its function is as follows. Involved in transcription antitermination. Required for transcription of ribosomal RNA (rRNA) genes. Binds specifically to the boxA antiterminator sequence of the ribosomal RNA (rrn) operons. The chain is Transcription antitermination protein NusB from Maricaulis maris (strain MCS10) (Caulobacter maris).